The primary structure comprises 334 residues: Serine/Arginine-related protein 53 (334 aa).

The segment covering 1-13 (MGRRSSDTEEESR) has biased composition (basic and acidic residues). 3 disordered regions span residues 1-173 (MGRR…IKAG), 201-222 (LKAK…QATL), and 241-290 (VQQT…SIPT). The segment covering 14–24 (SKRKKKHRRRS) has biased composition (basic residues). The segment covering 44–62 (PRSESRSWSRDRQPRSHSY) has biased composition (basic and acidic residues). Residues 78–118 (SRRKRSRSRSRGRGKSYRVQRSRSKSRTRRSRSRPRPRSHS) are compositionally biased toward basic residues. Basic and acidic residues-rich tracts occupy residues 132–166 (RSRD…KRGD), 201–218 (LKAK…KEED), and 247–262 (SSKD…EVKH). Residues 180–234 (AEQAKARLQLVLEAAAKADEALKAKERNEEEAKRRKEEDQATLGEQVKRVKEIEA) adopt a coiled-coil conformation.

Interacts (via Arg/Ser-rich domain) with LUC7L3, RBM39 and RSF1. Phosphorylated.

The protein localises to the nucleus speckle. It localises to the nucleus. The protein resides in the cytoplasm. Its function is as follows. Plays a role in pre-mRNA splicing. Involved in both constitutive and alternative pre-mRNA splicing. May have a role in the recognition of the 3' splice site during the second step of splicing. This is Serine/Arginine-related protein 53 (Rsrc1) from Rattus norvegicus (Rat).